The primary structure comprises 255 residues: 4-hydroxy-tetrahydrodipicolinate reductase (255 aa).

Residues 9-14 (GFKGKM), aspartate 35, 89-91 (GTT), and 115-118 (APNF) contribute to the NAD(+) site. The Proton donor/acceptor role is filled by histidine 145. (S)-2,3,4,5-tetrahydrodipicolinate is bound at residue histidine 146. The active-site Proton donor is the lysine 149. 155-156 (GT) provides a ligand contact to (S)-2,3,4,5-tetrahydrodipicolinate.

It belongs to the DapB family.

It localises to the cytoplasm. The catalysed reaction is (S)-2,3,4,5-tetrahydrodipicolinate + NAD(+) + H2O = (2S,4S)-4-hydroxy-2,3,4,5-tetrahydrodipicolinate + NADH + H(+). It carries out the reaction (S)-2,3,4,5-tetrahydrodipicolinate + NADP(+) + H2O = (2S,4S)-4-hydroxy-2,3,4,5-tetrahydrodipicolinate + NADPH + H(+). Its pathway is amino-acid biosynthesis; L-lysine biosynthesis via DAP pathway; (S)-tetrahydrodipicolinate from L-aspartate: step 4/4. Functionally, catalyzes the conversion of 4-hydroxy-tetrahydrodipicolinate (HTPA) to tetrahydrodipicolinate. The polypeptide is 4-hydroxy-tetrahydrodipicolinate reductase (Streptococcus pneumoniae (strain 70585)).